Reading from the N-terminus, the 140-residue chain is Flagellar assembly factor FliW (140 aa).

It belongs to the FliW family. In terms of assembly, interacts with translational regulator CsrA and flagellin(s).

The protein localises to the cytoplasm. Functionally, acts as an anti-CsrA protein, binds CsrA and prevents it from repressing translation of its target genes, one of which is flagellin. Binds to flagellin and participates in the assembly of the flagellum. The protein is Flagellar assembly factor FliW of Syntrophotalea carbinolica (strain DSM 2380 / NBRC 103641 / GraBd1) (Pelobacter carbinolicus).